The following is a 277-amino-acid chain: RNA-binding protein pno-1 (277 aa).

Disordered stretches follow at residues 1-52 (MATS…KLVK) and 72-100 (DEDA…GESR). Acidic residues predominate over residues 8–27 (FDDELPMEEGMPELLDDEDV). Residues 30-40 (TLPSLLEQNLD) are compositionally biased toward polar residues. The segment covering 72-81 (DEDATADTAD) has biased composition (acidic residues). Positions 198–250 (GDHVSRAIGRIAGKDGRTKLVIENTTKTRIVVANTKIHILGAYQNLKLARNAV) constitute a KH domain.

It belongs to the PNO1 family. Part of the small subunit (SSU) processome, composed of more than 70 proteins and the RNA chaperone small nucleolar RNA (snoRNA) U3.

The protein localises to the nucleus. It is found in the nucleolus. Its function is as follows. Part of the small subunit (SSU) processome, first precursor of the small eukaryotic ribosomal subunit. During the assembly of the SSU processome in the nucleolus, many ribosome biogenesis factors, an RNA chaperone and ribosomal proteins associate with the nascent pre-rRNA and work in concert to generate RNA folding, modifications, rearrangements and cleavage as well as targeted degradation of pre-ribosomal RNA by the RNA exosome. Positively regulates dimethylation of two adjacent adenosines in the loop of a conserved hairpin near the 3'-end of 18S rRNA. The chain is RNA-binding protein pno-1 from Caenorhabditis elegans.